The following is a 410-amino-acid chain: Scarecrow-like protein 32 (410 aa).

The 391-residue stretch at 18 to 408 (LRGCGDANFM…HSVVFATVWV (391 aa)) folds into the GRAS domain. The leucine repeat I (LRI) stretch occupies residues 25 to 88 (NFMEQLLLHC…AVSKTPTLSS (64 aa)). The interval 107-188 (LAAFVDLTPW…HFPPFINISY (82 aa)) is VHIID. The VHIID signature appears at 138–142 (VHIVD). Positions 190–227 (ELGSKLVNFATTRNITMEFTIVPSTYSDGFSSLLQQLR) are leucine repeat II (LRII). A PFYRE region spans residues 237 to 329 (LVVNCHMMLR…EAEISWKIEN (93 aa)). Residues 332 to 408 (AKEGAERVER…HSVVFATVWV (77 aa)) are SAW.

Belongs to the GRAS family. In terms of tissue distribution, expressed in seedlings, leaves and flowers.

Its subcellular location is the nucleus. Its function is as follows. Probable transcription factor involved in plant development. The polypeptide is Scarecrow-like protein 32 (SCL32) (Arabidopsis thaliana (Mouse-ear cress)).